Consider the following 313-residue polypeptide: Ketimine reductase mu-crystallin (313 aa).

A 3,3',5-triiodo-L-thyronine-binding site is contributed by Arg47. Residues Ser90, His91, Arg118, Ala143, Val145, Gln146, Asn167, Arg168, Thr169, Asn172, Thr204, Met205, and Val225 each coordinate NADPH. Glu256 lines the 3,3',5-triiodo-L-thyronine pocket. Residue Ser291 participates in NADPH binding.

This sequence belongs to the ornithine cyclodeaminase/mu-crystallin family. Homodimer. Binds the thyroid hormone triiodothyronine (T3); T3 binding inhibits enzymatic activity. As to expression, expressed in the spiral ligament of the cochlea (at protein level).

It localises to the cytoplasm. It catalyses the reaction L-pipecolate + NADP(+) = Delta(1)-piperideine-2-carboxylate + NADPH + H(+). The enzyme catalyses L-pipecolate + NAD(+) = Delta(1)-piperideine-2-carboxylate + NADH + H(+). The catalysed reaction is L-proline + NADP(+) = 1-pyrroline-2-carboxylate + NADPH + H(+). It carries out the reaction L-proline + NAD(+) = 1-pyrroline-2-carboxylate + NADH + H(+). It catalyses the reaction (3R)-1,4-thiomorpholine-3-carboxylate + NAD(+) = 3,4-dehydrothiomorpholine-3-carboxylate + NADH + 2 H(+). The enzyme catalyses (3R)-1,4-thiomorpholine-3-carboxylate + NADP(+) = 3,4-dehydrothiomorpholine-3-carboxylate + NADPH + 2 H(+). The catalysed reaction is (S)-cystathionine ketimine + NADH + 2 H(+) = (3R,5S)-2,3,5,6,7-pentahydro-1,4-thiazepine-3,5-dicarboxylate + NAD(+). It carries out the reaction (S)-cystathionine ketimine + NADPH + 2 H(+) = (3R,5S)-2,3,5,6,7-pentahydro-1,4-thiazepine-3,5-dicarboxylate + NADP(+). It catalyses the reaction (R)-lanthionine ketimine + NADPH + 2 H(+) = (3R,5R)-1,4-thiomorpholine-3,5-dicarboxylate + NADP(+). The enzyme catalyses Delta(2)-thiazoline-2-carboxylate + NADPH + 2 H(+) = L-thiazolidine-2-carboxylate + NADP(+). In terms of biological role, catalyzes the NAD(P)H-dependent reduction of imine double bonds of a number of cyclic ketimine substrates, including sulfur-containing cyclic ketimines. Under physiological conditions, it efficiently catalyzes delta(1)-piperideine-2-carboxylate (P2C) and delta(1)-pyrroline-2-carboxylate (Pyr2C) reduction, suggesting a central role in lysine and glutamate metabolism. Additional substrates are delta(2)-thiazoline-2-carboxylate (T2C), 3,4-dehydrothiomorpholine-3-carboxylate (AECK), and (R)-lanthionine ketimine (LK) that is reduced at very low rate compared to other substrates. Also catalyzes the NAD(P)H-dependent reduction of (S)-cystathionine ketimine (CysK). The polypeptide is Ketimine reductase mu-crystallin (Mus musculus (Mouse)).